We begin with the raw amino-acid sequence, 399 residues long: Tyrosine--tRNA ligase (399 aa).

An L-tyrosine-binding site is contributed by Y36. Residues P41–N50 carry the 'HIGH' region motif. L-tyrosine-binding residues include Y166 and Q170. The 'KMSKS' region motif lies at K226–S230. K229 lines the ATP pocket. Positions T332 to I395 constitute an S4 RNA-binding domain.

The protein belongs to the class-I aminoacyl-tRNA synthetase family. TyrS type 1 subfamily. As to quaternary structure, homodimer.

Its subcellular location is the cytoplasm. The catalysed reaction is tRNA(Tyr) + L-tyrosine + ATP = L-tyrosyl-tRNA(Tyr) + AMP + diphosphate + H(+). Its function is as follows. Catalyzes the attachment of tyrosine to tRNA(Tyr) in a two-step reaction: tyrosine is first activated by ATP to form Tyr-AMP and then transferred to the acceptor end of tRNA(Tyr). The chain is Tyrosine--tRNA ligase from Mycoplasma pneumoniae (strain ATCC 29342 / M129 / Subtype 1) (Mycoplasmoides pneumoniae).